A 332-amino-acid chain; its full sequence is Adenosine receptor A2b (332 aa).

At Met-1 to Ala-8 the chain is on the extracellular side. A helical transmembrane segment spans residues Leu-9–Gly-33. Residues Thr-34–Asn-43 lie on the Cytoplasmic side of the membrane. The chain crosses the membrane as a helical span at residues Tyr-44–Ile-67. Topologically, residues Ser-68–Cys-78 are extracellular. Residues Cys-78 and Cys-171 are joined by a disulfide bond. The chain crosses the membrane as a helical span at residues Leu-79 to Val-101. Residues Asp-102–Arg-121 are Cytoplasmic-facing. A helical transmembrane segment spans residues Ala-122–Trp-144. The Extracellular portion of the chain corresponds to Asn-145–Pro-178. Residues Asn-153 and Asn-163 are each glycosylated (N-linked (GlcNAc...) asparagine). Residue Glu-174 coordinates adenosine. Residues Met-179–Ile-203 traverse the membrane as a helical segment. Topologically, residues Lys-204–Ser-235 are cytoplasmic. Residues Leu-236–Phe-259 traverse the membrane as a helical segment. Position 254 (Asn-254) interacts with adenosine. At Gln-260–Lys-267 the chain is on the extracellular side. Residues Pro-268–Ala-291 form a helical membrane-spanning segment. Ser-279 and His-280 together coordinate adenosine. The Cytoplasmic segment spans residues Tyr-292–Leu-332. Residue Cys-311 is the site of S-palmitoyl cysteine attachment.

Belongs to the G-protein coupled receptor 1 family.

The protein resides in the cell membrane. In terms of biological role, receptor for adenosine. The activity of this receptor is mediated by G proteins which activate adenylyl cyclase. This Homo sapiens (Human) protein is Adenosine receptor A2b (ADORA2B).